A 129-amino-acid polypeptide reads, in one-letter code: MAKQPTRARKRVRKQVADGVAHIHASFNNTIVTITDRQGNALAWATAGGSGFRGSRKSTPFAAQVAAERCGEMAKEYGLKNLEVMVKGPGPGRESTVRALNAAGFRITNIVDATPIPHNGCRPPKKRRV.

This sequence belongs to the universal ribosomal protein uS11 family. Part of the 30S ribosomal subunit. Interacts with proteins S7 and S18. Binds to IF-3.

Located on the platform of the 30S subunit, it bridges several disparate RNA helices of the 16S rRNA. Forms part of the Shine-Dalgarno cleft in the 70S ribosome. The sequence is that of Small ribosomal subunit protein uS11 from Vibrio atlanticus (strain LGP32) (Vibrio splendidus (strain Mel32)).